Reading from the N-terminus, the 350-residue chain is MHNRSAAILLRPAAALYGMVMSLRNCLYDQGIFKSWHSPIPVVSVGNITTGGTGKTPLVDWIVKFYEASGIATAIVSRGYGRRTKGVQLVSDGGRLLLGSRDAGDETAMLAARNPRTIVVVAEKRVEGVQFLMHQFADRLPGVIVLDDAFQHRKIARDLDIVVVNAGAPEEIDAMLPAGRLREPLRGLRRAHLIILGKITDDANSATLLQTLRETGKPVIRSKIKPGKLIHVDGSENETNESVKTLAFAGIGAPEGFLHSLKTAGIKIAATKFFRDHEPYTESAIRSIIGEAKRQGLVPVTTEKDWFRIADEPELAEMLRQVGCRYLTITPEFPDGTQELERQLLDVLKR.

An ATP-binding site is contributed by 49 to 56 (TTGGTGKT).

Belongs to the LpxK family.

It carries out the reaction a lipid A disaccharide + ATP = a lipid IVA + ADP + H(+). Its pathway is glycolipid biosynthesis; lipid IV(A) biosynthesis; lipid IV(A) from (3R)-3-hydroxytetradecanoyl-[acyl-carrier-protein] and UDP-N-acetyl-alpha-D-glucosamine: step 6/6. In terms of biological role, transfers the gamma-phosphate of ATP to the 4'-position of a tetraacyldisaccharide 1-phosphate intermediate (termed DS-1-P) to form tetraacyldisaccharide 1,4'-bis-phosphate (lipid IVA). The chain is Tetraacyldisaccharide 4'-kinase from Chlorobaculum tepidum (strain ATCC 49652 / DSM 12025 / NBRC 103806 / TLS) (Chlorobium tepidum).